The sequence spans 606 residues: NADH-ubiquinone oxidoreductase chain 5 (606 aa).

A run of 16 helical transmembrane segments spans residues 1–21, 43–63, 87–107, 112–132, 137–157, 171–191, 213–233, 241–261, 273–293, 301–321, 324–344, 366–386, 407–429, 457–477, 482–502, and 582–602; these read MNPF…PIMM, AFTL…EMII, VMFI…SMWY, PFIN…MILV, LFQL…LIGW, AILY…WFLT, LIGL…HPWL, TPVS…FLLI, VQTM…LCAI, IVAF…GINQ, LAFL…MCSG, MPFT…MPYL, WALL…IIFF, LLIG…PMTV, MPLY…MLAL, and GLIK…MTLF.

It belongs to the complex I subunit 5 family. In terms of assembly, core subunit of respiratory chain NADH dehydrogenase (Complex I) which is composed of 45 different subunits.

It localises to the mitochondrion inner membrane. It carries out the reaction a ubiquinone + NADH + 5 H(+)(in) = a ubiquinol + NAD(+) + 4 H(+)(out). In terms of biological role, core subunit of the mitochondrial membrane respiratory chain NADH dehydrogenase (Complex I) which catalyzes electron transfer from NADH through the respiratory chain, using ubiquinone as an electron acceptor. Essential for the catalytic activity and assembly of complex I. This is NADH-ubiquinone oxidoreductase chain 5 (MT-ND5) from Sus scrofa (Pig).